A 192-amino-acid chain; its full sequence is GTP-binding protein RHO2 (192 aa).

14 to 21 is a binding site for GTP; it reads GDGACGKT. The short motif at 36 to 44 is the Effector region element; it reads YHPTVFENY. Residues 61 to 65 and 119 to 122 each bind GTP; these read DTAGQ and LKKD. Residue C188 is the site of S-palmitoyl cysteine attachment. C189 bears the Cysteine methyl ester mark. C189 carries S-geranylgeranyl cysteine lipidation. A propeptide spans 190–192 (removed in mature form); the sequence is IIL.

It belongs to the small GTPase superfamily. Rho family. Interacts with BEM4.

The protein localises to the cell membrane. The catalysed reaction is GTP + H2O = GDP + phosphate + H(+). The chain is GTP-binding protein RHO2 (RHO2) from Saccharomyces cerevisiae (strain ATCC 204508 / S288c) (Baker's yeast).